Consider the following 692-residue polypeptide: Glycine--tRNA ligase beta subunit (692 aa).

It belongs to the class-II aminoacyl-tRNA synthetase family. Tetramer of two alpha and two beta subunits.

It localises to the cytoplasm. It carries out the reaction tRNA(Gly) + glycine + ATP = glycyl-tRNA(Gly) + AMP + diphosphate. The polypeptide is Glycine--tRNA ligase beta subunit (Oceanobacillus iheyensis (strain DSM 14371 / CIP 107618 / JCM 11309 / KCTC 3954 / HTE831)).